We begin with the raw amino-acid sequence, 551 residues long: Transcription factor 7-like 1-B (551 aa).

Over residues 1-11 (MPQLNGGGGDE) the composition is skewed to gly residues. Disordered stretches follow at residues 1 to 76 (MPQL…DLES), 298 to 326 (QEPN…KPHI), and 392 to 525 (GWSA…PPSP). The span at 19-32 (ISFKDEGEQEDKIS) shows a compositional bias: basic and acidic residues. A compositionally biased stretch (low complexity) spans 46–61 (SSLVSESENNSSSSDS). Residues 63-76 (QTERRPQPRADLES) are compositionally biased toward basic and acidic residues. The HMG box DNA-binding region spans 326-394 (IKKPLNAFML…LHSQLYPGWS (69 aa)). A compositionally biased stretch (low complexity) spans 449–468 (SPATPSAALASPAAPAATHS). Residues 469–478 (EQAQPLSLTT) are compositionally biased toward polar residues. Low complexity predominate over residues 493-505 (SSSSSSSSSSSGL).

Belongs to the TCF/LEF family. Interacts with ctnnb1.

The protein localises to the nucleus. In terms of biological role, participates in the Wnt signaling pathway. Probably binds to DNA and acts as a repressor in the absence of ctnnb1, and possibly as an activator in its presence. Regulates anterior-posterior patterning in the neuroectoderm by repressing posterior neural fates. Also required for hindbrain morphogenesis. In Danio rerio (Zebrafish), this protein is Transcription factor 7-like 1-B (tcf7l1b).